Consider the following 134-residue polypeptide: Protein dpy-30 homolog (134 aa).

The disordered stretch occupies residues M1 to Y81. A compositionally biased stretch (low complexity) spans A31–K68. Positions S71 to Y81 are enriched in polar residues.

The protein belongs to the dpy-30 family. As to quaternary structure, core component of several methyltransferase-containing complexes. Component of the SET1 complex, composed at least of the catalytic subunit Set1, wds/WDR5, Wdr82, Rbbp5, ash2, Cfp1/CXXC1, hcf and Dpy-30L1. Component of the MLL3/4 complex composed at least of the catalytic subunit trr, ash2, Rbbp5, Dpy-30L1, wds, hcf, ptip, Pa1, Utx, Lpt and Ncoa6. Expressed in larval brain, gonad, imaginal disk and salivary gland and in adult brain, testis, ovary and salivary gland.

The protein resides in the nucleus. In terms of biological role, component of the SET1 complex that specifically di- and trimethylates 'Lys-4' of histone H3 and of the MLL3/4 complex which also methylates histone H3 'Lys-4'. Inhibits MTF-1 transcription factor activity. This chain is Protein dpy-30 homolog, found in Drosophila melanogaster (Fruit fly).